The sequence spans 415 residues: ATP-dependent RNA helicase RhlB (415 aa).

The Q motif motif lies at glutamine 9–alanine 37. The Helicase ATP-binding domain maps to leucine 40–isoleucine 218. Alanine 53 to threonine 60 provides a ligand contact to ATP. The short motif at aspartate 164 to aspartate 167 is the DEAD box element. In terms of domain architecture, Helicase C-terminal spans aspartate 241–leucine 389.

Belongs to the DEAD box helicase family. RhlB subfamily. Component of the RNA degradosome, which is a multiprotein complex involved in RNA processing and mRNA degradation.

It localises to the cytoplasm. It carries out the reaction ATP + H2O = ADP + phosphate + H(+). Its function is as follows. DEAD-box RNA helicase involved in RNA degradation. Has RNA-dependent ATPase activity and unwinds double-stranded RNA. This is ATP-dependent RNA helicase RhlB from Haemophilus influenzae (strain ATCC 51907 / DSM 11121 / KW20 / Rd).